A 143-amino-acid chain; its full sequence is Large ribosomal subunit protein uL11 (143 aa).

The protein belongs to the universal ribosomal protein uL11 family. In terms of assembly, part of the ribosomal stalk of the 50S ribosomal subunit. Interacts with L10 and the large rRNA to form the base of the stalk. L10 forms an elongated spine to which L12 dimers bind in a sequential fashion forming a multimeric L10(L12)X complex. In terms of processing, one or more lysine residues are methylated.

Functionally, forms part of the ribosomal stalk which helps the ribosome interact with GTP-bound translation factors. This is Large ribosomal subunit protein uL11 from Laribacter hongkongensis (strain HLHK9).